The sequence spans 201 residues: MGLSPNATTAGPRLPRPLVAPAATGILDPRTGRPVGADDRFFLEVNNELADKGFFVAATDDLITWARTGSLMWMTFGLACCAVEMMQMSMPRYDAERFGFAPRASPRQSDVMIVAGTLTNKMAPALRKVYDQMPEPRYVISMGSCANGGGYYHYSYAVVRGCDRIVPIDIYVPGCPPTAEALLYGVMLLQKKIRRTGTIER.

[4Fe-4S] cluster-binding residues include Cys80, Cys81, Cys145, and Cys175.

This sequence belongs to the complex I 20 kDa subunit family. In terms of assembly, NDH-1 is composed of 14 different subunits. Subunits NuoB, C, D, E, F, and G constitute the peripheral sector of the complex. The cofactor is [4Fe-4S] cluster.

Its subcellular location is the cell inner membrane. The catalysed reaction is a quinone + NADH + 5 H(+)(in) = a quinol + NAD(+) + 4 H(+)(out). NDH-1 shuttles electrons from NADH, via FMN and iron-sulfur (Fe-S) centers, to quinones in the respiratory chain. The immediate electron acceptor for the enzyme in this species is believed to be ubiquinone. Couples the redox reaction to proton translocation (for every two electrons transferred, four hydrogen ions are translocated across the cytoplasmic membrane), and thus conserves the redox energy in a proton gradient. The polypeptide is NADH-quinone oxidoreductase subunit B 1 (Rhodopseudomonas palustris (strain BisB18)).